Consider the following 212-residue polypeptide: Cytidylate kinase (212 aa).

7–15 provides a ligand contact to ATP; it reads GPAASGKGT.

This sequence belongs to the cytidylate kinase family. Type 1 subfamily.

It is found in the cytoplasm. The catalysed reaction is CMP + ATP = CDP + ADP. It carries out the reaction dCMP + ATP = dCDP + ADP. This chain is Cytidylate kinase, found in Rhodopseudomonas palustris (strain BisB5).